Consider the following 172-residue polypeptide: Bcl-2-related protein A1 (172 aa).

The BH1 motif lies at Lys77–Gly97. The short motif at Glu132–Lys147 is the BH2 element.

It belongs to the Bcl-2 family. As to quaternary structure, interacts directly with BCL2L11/BIM and PMAIP1. Interacts directly with BAK1, BID, BMF and BBC3. Interacts with BOP. Interacts with isoform 3, isoform 4 and isoform 5 of ING4. Interacts with UBQLN4. Expressed in hemopoietic tissues, including bone marrow, spleen and thymus.

The protein localises to the cytoplasm. Its function is as follows. Retards apoptosis induced by IL-3 deprivation. May function in the response of hemopoietic cells to external signals and in maintaining endothelial survival during infection. Can inhibit apoptosis induced by serum starvation in the mammary epithelial cell line HC11. This chain is Bcl-2-related protein A1 (Bcl2a1), found in Mus musculus (Mouse).